The following is a 445-amino-acid chain: MREIVHLQAGQCGNQIGAKFWEVISDEHGIDPTGTYHGDSDLQLERINVYYNEATGGKYVPRAVLVDLEPGTMDSVRSGPFRQIFRPDNFVFGQSGAGNNWAKGHYTEGAELVDSVLDVVRKEAESCDCLQGFQLTHSLGGGTGSGMGTLLISKIREEYPDRIMNTFSVVPSPKVSDTVVEPYNATLSVHQLVENTDETYCIDNEALYDICFRTLKLTTPTYGDLNHLVSATMSGVTTCLRFPGQLNADLRKLAVNMVPFPRLHFFMPGFAPLTSRGSQQYRALTVPDLTQQMFDAKNMMAACEPGHGRYLTVAAVFRGRMSMKEVDEQMLNVQNKNSSYFVEWIPNNVKTAVCDIPPRGLKMSATFIGNSTAIQELFKRISEQFTAMFRRKAFLHWYTGEGMDEMEFTEAESNMNDLVSEYQQYQDATAEEEGEFEEEAEEEAE.

The MREI motif motif lies at Met1–Ile4. GTP-binding residues include Gln11, Glu69, Ser138, Gly142, Thr143, Gly144, Asn204, and Asn226. Glu69 lines the Mg(2+) pocket. The tract at residues Tyr425–Glu445 is disordered. The segment covering Thr429 to Glu445 has biased composition (acidic residues). Glu438 is modified (5-glutamyl polyglutamate).

This sequence belongs to the tubulin family. In terms of assembly, dimer of alpha and beta chains. A typical microtubule is a hollow water-filled tube with an outer diameter of 25 nm and an inner diameter of 15 nM. Alpha-beta heterodimers associate head-to-tail to form protofilaments running lengthwise along the microtubule wall with the beta-tubulin subunit facing the microtubule plus end conferring a structural polarity. Microtubules usually have 13 protofilaments but different protofilament numbers can be found in some organisms and specialized cells. Requires Mg(2+) as cofactor. Post-translationally, some glutamate residues at the C-terminus are polyglycylated, resulting in polyglycine chains on the gamma-carboxyl group. Glycylation is mainly limited to tubulin incorporated into axonemes (cilia and flagella) whereas glutamylation is prevalent in neuronal cells, centrioles, axonemes, and the mitotic spindle. Both modifications can coexist on the same protein on adjacent residues, and lowering polyglycylation levels increases polyglutamylation, and reciprocally. The precise function of polyglycylation is still unclear. In terms of processing, some glutamate residues at the C-terminus are polyglutamylated, resulting in polyglutamate chains on the gamma-carboxyl group. Polyglutamylation plays a key role in microtubule severing by spastin (SPAST). SPAST preferentially recognizes and acts on microtubules decorated with short polyglutamate tails: severing activity by SPAST increases as the number of glutamates per tubulin rises from one to eight, but decreases beyond this glutamylation threshold. Highly expressed in testis.

Its subcellular location is the cytoplasm. It is found in the cytoskeleton. Tubulin is the major constituent of microtubules, a cylinder consisting of laterally associated linear protofilaments composed of alpha- and beta-tubulin heterodimers. Microtubules grow by the addition of GTP-tubulin dimers to the microtubule end, where a stabilizing cap forms. Below the cap, tubulin dimers are in GDP-bound state, owing to GTPase activity of alpha-tubulin. TUBB3 plays a role in dorsal root ganglion axon projection towards the spinal cord. This chain is Tubulin beta-3 chain, found in Gallus gallus (Chicken).